We begin with the raw amino-acid sequence, 132 residues long: Small ribosomal subunit protein uS8 (132 aa).

Belongs to the universal ribosomal protein uS8 family. As to quaternary structure, part of the 30S ribosomal subunit. Contacts proteins S5 and S12.

In terms of biological role, one of the primary rRNA binding proteins, it binds directly to 16S rRNA central domain where it helps coordinate assembly of the platform of the 30S subunit. The protein is Small ribosomal subunit protein uS8 of Thermoanaerobacter pseudethanolicus (strain ATCC 33223 / 39E) (Clostridium thermohydrosulfuricum).